Reading from the N-terminus, the 164-residue chain is MTIDNDLSRIAEQEKALSFDAFDLTTAWQLGKLLQELASERGLGIAIDVTLHSMPVFYAALPGVTPDNVNWVRRKRNMVLRYFRSSYASGLKLSKDGKTVEDNGLDGADYAPHGGSFPINVKGTGCIGAVTVSGLPQRDDHNLVVEALALMLAKDLDTLRLSPL.

The protein belongs to the UPF0303 family.

The polypeptide is UPF0303 protein RHE_CH02903 (Rhizobium etli (strain ATCC 51251 / DSM 11541 / JCM 21823 / NBRC 15573 / CFN 42)).